A 383-amino-acid chain; its full sequence is Chitinase-3-like protein 1 (383 aa).

An N-terminal signal peptide occupies residues 1–21 (MGLRAAHTGFVVLVLLQSCAA). A GH18 domain is found at 22–383 (YKLICYYTSW…SAIKDVLARV (362 aa)). A disulfide bond links Cys26 and Cys51. A glycan (N-linked (GlcNAc...) asparagine) is linked at Asn60. Chitin contacts are provided by residues 70–71 (EW), 97–100 (GGWN), Tyr141, 204–207 (LTYD), and Arg263. Cysteines 300 and 364 form a disulfide. The tract at residues 324-338 (QWVAYDDQESVKNKA) is important for AKT1 activation and IL8 production. Trp352 is a binding site for chitin. The N-linked (GlcNAc...) asparagine glycan is linked to Asn367.

The protein belongs to the glycosyl hydrolase 18 family. As to quaternary structure, monomer. In terms of processing, glycosylated. As to expression, mammary secretions collected during the non-lactating period.

It localises to the secreted. The protein resides in the extracellular space. Its subcellular location is the cytoplasm. It is found in the perinuclear region. The protein localises to the endoplasmic reticulum. Functionally, carbohydrate-binding lectin with a preference for chitin. Has no chitinase activity. May play a role in tissue remodeling and in the capacity of cells to respond to and cope with changes in their environment. Plays a role in T-helper cell type 2 (Th2) inflammatory response and IL-13-induced inflammation, regulating allergen sensitization, inflammatory cell apoptosis, dendritic cell accumulation and M2 macrophage differentiation. Facilitates invasion of pathogenic enteric bacteria into colonic mucosa and lymphoid organs. Mediates activation of AKT1 signaling pathway and subsequent IL8 production in colonic epithelial cells. Regulates antibacterial responses in lung by contributing to macrophage bacterial killing, controlling bacterial dissemination and augmenting host tolerance. Also regulates hyperoxia-induced injury, inflammation and epithelial apoptosis in lung. The polypeptide is Chitinase-3-like protein 1 (CHI3L1) (Bos taurus (Bovine)).